The following is a 399-amino-acid chain: 26S proteasome regulatory subunit S10B homolog B (399 aa).

Gly-180–Thr-187 provides a ligand contact to ATP. A Glycyl lysine isopeptide (Lys-Gly) (interchain with G-Cter in ubiquitin) cross-link involves residue Lys-203.

The protein belongs to the AAA ATPase family. Component of the 19S regulatory particle (RP/PA700) base subcomplex of the 26S proteasome. The 26S proteasome is composed of a core protease (CP), known as the 20S proteasome, capped at one or both ends by the 19S regulatory particle (RP/PA700). The RP/PA700 complex is composed of at least 17 different subunits in two subcomplexes, the base and the lid, which form the portions proximal and distal to the 20S proteolytic core, respectively.

The protein resides in the cytoplasm. The protein localises to the nucleus. The 26S proteasome is involved in the ATP-dependent degradation of ubiquitinated proteins. The regulatory (or ATPase) complex confers ATP dependency and substrate specificity to the 26S complex. This is 26S proteasome regulatory subunit S10B homolog B (RPT4B) from Arabidopsis thaliana (Mouse-ear cress).